The chain runs to 427 residues: Indole diterpene prenyltransferase idtF (427 aa).

Residues R97, K195, R264, K266, Y268, and Y352 each contribute to the substrate site.

The protein belongs to the tryptophan dimethylallyltransferase family.

It participates in secondary metabolite biosynthesis. Indole diterpene prenyltransferase; part of the gene cluster that mediates the biosynthesis of paspalitrems, indole-diterpene (IDT) mycotoxins that are potent tremorgens in mammals. The geranylgeranyl diphosphate (GGPP) synthase idtG is proposed to catalyze the first step in IDT biosynthesis via catalysis of a series of iterative condensations of isopentenyl diphosphate (IPP) with dimethylallyl diphosphate (DMAPP), geranyl diphosphate (GPP), and farnesyl diphosphate (FPP), to form GGPP. Condensation of indole-3-glycerol phosphate with GGPP by the prenyltransferase idtC then forms 3-geranylgeranylindole (3-GGI). Epoxidation of the two terminal alkenes of the geranylgeranyl moiety by the FAD-dependent monooxygenase idtM, and cyclization by the terpene cyclase idtB then leads to the production of paspaline. The cytochrome P450 monooxygenase idtP then catalyzes oxidative elimination of the pendant methyl group at C-12 of paspaline and generates the C-10 ketone to yield 13-desoxypaxilline. The cytochrome P450 monooxygenase idtQ may catalyze the C-13 oxidation of 13-desoxypaxilline to afford paxilline. Considering that both paspalicine and paxilline were detected in C.paspali, idtQ also catalyzes the formation of paspalinine from 13-desoxypaxilline via paspalicine as an intermediate. Finally, the alpha-prenyltransferase idtF prenylates paspalinine at the C-20 or the C-21 positions to yield paspalitrems A and C, respectively. The hydroxylation of paspalitrem A at C-32 by a still unknown oxidase affords paspalitrem B. This chain is Indole diterpene prenyltransferase idtF, found in Claviceps paspali (Rye ergot fungus).